The primary structure comprises 393 residues: MYQIGEALVGDGAELAHIDLIIGEKSGPVGIAFANGLSQLSAGHTPLLAVIRPNLLTKPATLIIPKVTLKNQTQVTEMFGPVQAAIAKGIADCIEEGTFKEYDIEDLVILASVYLAPEAKDYNKIYRYNYGAIKLALNRALEGFPPEKTILYEKDRGAHAVMGFKVQRLWDAPYLQVAMDLVDMGKVAKVLKEVPDNDHVIIEAGTPLIKRFGLSVISEIRKLRPNAFIIADMKILDTGNLESRMAADASADAVVISGLAPASTIEKAIEETKKTGIYSIIDMLNVPNPVELIASLKIKPDIVELHRAIDCETSCHAWGDIVAIKKAAGGKLLVATAGGVRVEVVKEALASGADILVVGRAITASKDIRHATEEFLEQLHKDEIDQFRVMTDF.

The interval 1–161 (MYQIGEALVG…YEKDRGAHAV (161 aa)) is formaldehyde-activating enzyme. The active-site Proton donor is H17. Positions 19, 48, 66, 68, and 83 each coordinate substrate. The tract at residues 162-393 (MGFKVQRLWD…IDQFRVMTDF (232 aa)) is 3-hexulose-6-phosphate synthase.

This sequence in the N-terminal section; belongs to the formaldehyde-activating enzyme family. The protein in the C-terminal section; belongs to the HPS/KGPDC family. HPS subfamily.

It catalyses the reaction 5,6,7,8-tetrahydromethanopterin + formaldehyde = 5,10-methylenetetrahydromethanopterin + H2O. It carries out the reaction D-ribulose 5-phosphate + formaldehyde = D-arabino-hex-3-ulose 6-phosphate. It functions in the pathway carbohydrate biosynthesis; D-ribose 5-phosphate biosynthesis. Its function is as follows. Catalyzes the condensation of formaldehyde with tetrahydromethanopterin (H(4)MPT) to 5,10-methylenetetrahydromethanopterin. Functionally, catalyzes the reversible formation of ribulose-5-phosphate and formaldehyde from 3-hexulose-6-phosphate. The sequence is that of Bifunctional enzyme Fae/Hps from Methanosphaerula palustris (strain ATCC BAA-1556 / DSM 19958 / E1-9c).